The chain runs to 464 residues: Sensor protein IrlS (464 aa).

Over 1–13 (MIRRLLPRTLRAR) the chain is Periplasmic. The chain crosses the membrane as a helical span at residues 14-34 (LTALIILSTAATLALSGVALY). Topologically, residues 35–166 (SALHNRLVGM…DHALLRAYAY (132 aa)) are cytoplasmic. Residues 167–187 (TVVVIEVLAVVLTAALAYGIA) form a helical membrane-spanning segment. Residues 188–241 (MLGLSPLRRLVARAEQMSSSRLAQPLPELDTSGELKEMEHAFNAMLKRLDESFV) enclose the HAMP domain. The Periplasmic segment spans residues 188–464 (MLGLSPLRRL…FWLKFPAHAA (277 aa)). The Histidine kinase domain maps to 249-463 (NLAHDMRTPL…TFWLKFPAHA (215 aa)). Histidine 252 carries the post-translational modification Phosphohistidine; by autocatalysis.

Its subcellular location is the cell inner membrane. It catalyses the reaction ATP + protein L-histidine = ADP + protein N-phospho-L-histidine.. Functionally, member of the two-component regulatory system IrlR/IrlS. May be involved in invasion of eukaryotic cells and heavy-metal resistance. Probably activates IrlR by phosphorylation. This is Sensor protein IrlS (irlS) from Burkholderia pseudomallei (strain K96243).